The sequence spans 166 residues: Regulatory protein RecX (166 aa).

This sequence belongs to the RecX family.

Its subcellular location is the cytoplasm. Its function is as follows. Modulates RecA activity. In Klebsiella pneumoniae subsp. pneumoniae (strain ATCC 700721 / MGH 78578), this protein is Regulatory protein RecX.